Here is a 1052-residue protein sequence, read N- to C-terminus: Carboxylic acid reductase (1052 aa).

The interval 21–344 (RALNEPNREW…ATEFTPFPFY (324 aa)) is adenylation (A) domain. AMP contacts are provided by residues 334-335 (SA), T339, and 419-422 (YQGR). Residues 560 to 643 (SSSDALIVSI…RLADYLLSIV (84 aa)) form the Carrier domain. An O-(pantetheine 4'-phosphoryl)serine modification is found at S595. Positions 684-979 (GQVVVITGTT…QKIVPLDEWL (296 aa)) are carboxylic acid reductase (R) domain. Residues 693 to 696 (TGGI), R718, 774 to 776 (NQW), S814, Y844, and K848 each bind NADP(+).

It belongs to the adenylate-forming reductase family. Mg(2+) is required as a cofactor.

The enzyme catalyses an aromatic aldehyde + AMP + diphosphate + NADP(+) = an aromatic carboxylate + ATP + NADPH + H(+). It catalyses the reaction a carboxylate + ATP + NADPH + H(+) = an aldehyde + AMP + diphosphate + NADP(+). The catalysed reaction is benzoate + ATP + NADPH + H(+) = benzaldehyde + AMP + diphosphate + NADP(+). It carries out the reaction (E)-cinnamate + ATP + NADPH + H(+) = (E)-cinnamaldehyde + AMP + diphosphate + NADP(+). The enzyme catalyses piperonylate + ATP + NADPH + H(+) = piperonal + AMP + diphosphate + NADP(+). It catalyses the reaction salicylate + ATP + NADPH + H(+) = salicylaldehyde + AMP + diphosphate + NADP(+). The catalysed reaction is 3-hydroxybenzoate + ATP + NADPH + H(+) = 3-hydroxybenzaldehyde + AMP + diphosphate + NADP(+). It carries out the reaction 2-methoxybenzoate + ATP + NADPH + H(+) = 2-methoxybenzaldehyde + AMP + diphosphate + NADP(+). The enzyme catalyses 3-methoxybenzoate + ATP + NADPH + H(+) = 3-methoxybenzaldehyde + AMP + diphosphate + NADP(+). It catalyses the reaction 4-hydroxybenzoate + ATP + NADPH + H(+) = 4-hydroxybenzaldehyde + AMP + diphosphate + NADP(+). The catalysed reaction is 4-methoxybenzoate + ATP + NADPH + H(+) = 4-methoxybenzaldehyde + AMP + diphosphate + NADP(+). It carries out the reaction 3-phenylpropanoate + ATP + NADPH + H(+) = 3-phenylpropanal + AMP + diphosphate + NADP(+). The enzyme catalyses picolinate + ATP + NADPH + H(+) = picolinal + AMP + diphosphate + NADP(+). It catalyses the reaction propanoate + ATP + NADPH + H(+) = propanal + AMP + diphosphate + NADP(+). The catalysed reaction is butanoate + ATP + NADPH + H(+) = butanal + AMP + diphosphate + NADP(+). It carries out the reaction pentanoate + ATP + NADPH + H(+) = pentanal + AMP + diphosphate + NADP(+). The enzyme catalyses hexanoate + ATP + NADPH + H(+) = hexanal + AMP + diphosphate + NADP(+). It catalyses the reaction heptanoate + ATP + NADPH + H(+) = heptanal + AMP + diphosphate + NADP(+). The catalysed reaction is octanoate + ATP + NADPH + H(+) = octanal + AMP + diphosphate + NADP(+). It carries out the reaction nonanoate + ATP + NADPH + H(+) = nonanal + AMP + diphosphate + NADP(+). Carboxylic acid reductase that shows a broad range of substrate specificity towards aromatic acids, especially to phenyl carboxylic and phenyl acrylic acids, to convert them into their respective aldehydes. Also able to use aliphatic acids as substrates. The protein is Carboxylic acid reductase of Neurospora crassa (strain ATCC 24698 / 74-OR23-1A / CBS 708.71 / DSM 1257 / FGSC 987).